The following is a 221-amino-acid chain: uncharacterized protein (221 aa).

The signal sequence occupies residues M1–Q30.

Its subcellular location is the virion. This is an uncharacterized protein from Acanthamoeba polyphaga mimivirus (APMV).